The following is a 129-amino-acid chain: Small ribosomal subunit protein uS11 (129 aa).

Belongs to the universal ribosomal protein uS11 family. As to quaternary structure, part of the 30S ribosomal subunit. Interacts with proteins S7 and S18. Binds to IF-3.

Its function is as follows. Located on the platform of the 30S subunit, it bridges several disparate RNA helices of the 16S rRNA. Forms part of the Shine-Dalgarno cleft in the 70S ribosome. The polypeptide is Small ribosomal subunit protein uS11 (Staphylococcus haemolyticus (strain JCSC1435)).